A 1027-amino-acid chain; its full sequence is LLGL scribble cell polarity complex component 2 (1027 aa).

10 WD repeats span residues 36-69 (SALG…FMGL), 76-117 (VLQI…EESF), 132-169 (VTEI…DRTI), 193-227 (ALQE…LSHF), 233-268 (LENA…NPEP), 282-324 (AITK…GQQT), 332-366 (VIDF…VIDL), 388-464 (TCSH…YKLS), 508-583 (QKIF…FVLV), and 592-653 (TSLA…LRQS). Position 653 is a phosphoserine (serine 653). Residues 654–669 (FRRMRRSRVSSHKRRP) are compositionally biased toward basic residues. The disordered stretch occupies residues 654 to 678 (FRRMRRSRVSSHKRRPGGPTGEAQA). WD repeat units follow at residues 715–771 (VRTL…KEIQ), 780–832 (GILV…VSAK), 837–890 (LTAL…VRYS), and 904–927 (VFTK…SLST). Residues 940–981 (TKAKKHNRPSNGNGTGLKMTSSGHVRNSKSQSDGDEKKPGPV) form a disordered region. Positions 957 to 970 (KMTSSGHVRNSKSQ) are enriched in polar residues. Phosphoserine is present on residues serine 971 and serine 1022.

Belongs to the WD repeat L(2)GL family. In terms of assembly, interacts with GPSM2/LGN, PRKCI/aPKC and PARD6B/Par-6. The complex is enhanced during mitosis. Interacts with DCAF1. Phosphorylated at Ser-653 by PRKCI. Phosphorylation is enhanced during cell polarization induced by calcium. Phosphorylation may occur during the cell-cell contact-induced cell polarization and may contribute to the segregation of LLGL2 from the PRKCI/aPKC and PARD6B/Par-6 complex.

The protein localises to the cytoplasm. Part of a complex with GPSM2/LGN, PRKCI/aPKC and PARD6B/Par-6, which may ensure the correct organization and orientation of bipolar spindles for normal cell division. This complex plays roles in the initial phase of the establishment of epithelial cell polarity. In Mus musculus (Mouse), this protein is LLGL scribble cell polarity complex component 2 (Llgl2).